Reading from the N-terminus, the 326-residue chain is Olfactory receptor 11H1 (326 aa).

At 1 to 44 (MCPLTLQVTGLMNVSEPNSSFAFVNEFILQGFSCEWTIQIFLFS) the chain is on the extracellular side. N-linked (GlcNAc...) asparagine glycosylation is found at N13 and N18. A helical membrane pass occupies residues 45-65 (LFTTTYALTITGNGAIAFVLW). Residues 66–72 (CDRRLHT) are Cytoplasmic-facing. Residues 73–93 (PMYMFLGNFSFLEIWYVSSTV) traverse the membrane as a helical segment. Over 94-112 (PKMLVNFLSEKKNISFAGC) the chain is Extracellular. N-linked (GlcNAc...) asparagine glycosylation is present at N106. A disulfide bond links C112 and C194. Residues 113–133 (FLQFYFFFSLGTSECLLLTVM) traverse the membrane as a helical segment. Residues 134-158 (AFDQYLAICRPLLYPNIMTGHLYAK) are Cytoplasmic-facing. The helical transmembrane segment at 159-179 (LVILCWVCGFLWFLIPIVLIS) threads the bilayer. Topologically, residues 180 to 216 (QMPFCGPNIIDHVVCDPGPRFALDCVSAPRIQLFCYT) are extracellular. A helical transmembrane segment spans residues 217–237 (LSSLVIFGNFLFIIGSYTLVL). The Cytoplasmic portion of the chain corresponds to 238 to 259 (KAMLGMPSSTGRHKAFSTCGSH). A helical membrane pass occupies residues 260–280 (LAVVSLCYSSLMVMYVSPGLG). Over 281 to 287 (HSTGMQK) the chain is Extracellular. The helical transmembrane segment at 288-308 (IETLFYAMVTPLFNPLIYSLQ) threads the bilayer. The Cytoplasmic segment spans residues 309–326 (NKEIKAALRKVLGSSNII).

The protein belongs to the G-protein coupled receptor 1 family.

The protein localises to the cell membrane. Odorant receptor. This chain is Olfactory receptor 11H1 (OR11H1), found in Homo sapiens (Human).